A 142-amino-acid polypeptide reads, in one-letter code: Small ribosomal subunit protein bS6 (142 aa).

The segment at V96–E142 is disordered. Residues L103–S124 show a composition bias toward basic and acidic residues. Positions A125–E142 are enriched in acidic residues.

Belongs to the bacterial ribosomal protein bS6 family.

Its function is as follows. Binds together with bS18 to 16S ribosomal RNA. The protein is Small ribosomal subunit protein bS6 of Pseudomonas fluorescens (strain Pf0-1).